The following is a 356-amino-acid chain: uncharacterized protein (356 aa).

This is an uncharacterized protein from Bacillus subtilis (strain 168).